A 273-amino-acid polypeptide reads, in one-letter code: Large ribosomal subunit protein uL2 (273 aa).

Disordered regions lie at residues 28–53 (KPFAPLVEKNSKSGGRNNNGRITTRH) and 221–273 (RGTA…RRSK). Residues 39–48 (KSGGRNNNGR) show a composition bias toward low complexity.

It belongs to the universal ribosomal protein uL2 family. Part of the 50S ribosomal subunit. Forms a bridge to the 30S subunit in the 70S ribosome.

In terms of biological role, one of the primary rRNA binding proteins. Required for association of the 30S and 50S subunits to form the 70S ribosome, for tRNA binding and peptide bond formation. It has been suggested to have peptidyltransferase activity; this is somewhat controversial. Makes several contacts with the 16S rRNA in the 70S ribosome. This Salmonella agona (strain SL483) protein is Large ribosomal subunit protein uL2.